We begin with the raw amino-acid sequence, 172 residues long: 2S seed storage-like protein (172 aa).

Residues 1–35 (MGVFSPSTTRLTLKWFSLSVALFLLFHWGIPSVDG) form the signal peptide. The tract at residues 108–172 (FMDSDSQEDA…RYSMTGSSFK (65 aa)) is disordered. Positions 151–160 (EPPRRCDIQR) are enriched in basic and acidic residues.

It belongs to the 2S seed storage albumins family.

This chain is 2S seed storage-like protein, found in Picea glauca (White spruce).